The sequence spans 461 residues: Demethyllactenocin mycarosyltransferase (461 aa).

Residues M1–G21 form a disordered region.

This sequence belongs to the UDP-glycosyltransferase family.

The catalysed reaction is dTDP-beta-L-mycarose + demethyllactenocin = demethylmacrocin + dTDP + H(+). Its function is as follows. Involved in the biosynthesis of mycarose which is a 6-deoxyhexose sugar required during production of the macrolide antibiotic tylosin. Catalyzes the transfer of L-mycarosyl from dTDP-beta-L-mycarose to demethyllactenocin to yield demethylmacrocin. This chain is Demethyllactenocin mycarosyltransferase (tylCV), found in Streptomyces fradiae (Streptomyces roseoflavus).